The following is a 115-amino-acid chain: Secapin (115 aa).

An N-terminal signal peptide occupies residues 1–24; that stretch reads MRFQVYILHLCFFILVVLTYLSQG. A propeptide spanning residues 25-90 is cleaved from the precursor; the sequence is QSYTTTTTTS…STENFDITNR (66 aa). Cys99 and Cys110 are joined by a disulfide.

It belongs to the secapin family. Expressed in the epidermis, fat body and venom gland.

Its subcellular location is the secreted. Functionally, serine protease inhibitor which exhibits antifibrinolytic, antielastolytic and antimicrobial activities. Displays antimicrobial activity against bacteria and fungi. Likely functions in the innate immune response to microbial infection and possibly in the venom, as an antifibrinolytic agent. The recombinant form inhibits trypsin (IC(50)=80.02 nM, Ki=127.25 nM), chymotrypsin (IC(50)=393.78 nM, Ki=432.59 nM), the microbial serine proteases subtilisin A (IC(50)=379.20 nM, Ki=492.77 nM) and proteinase K (IC(50)=189.43 nM, Ki=271.76 nM), plasmin (IC(50)=457.98 nM, Ki=502.91 nM), human elastase (IC(50)=347.81 nM, Ki=469.90 nM) and porcine elastase (IC(50)=94.70 nM, Ki=125.62 nM). Does not inhibit thrombin. Binds to human plasmin and inhibits the plasmin-mediated degradation of fibrin to fibrin degradation products, indicating its role as an anti-fibrinolytic agent. Also binds to bacterial and fungal surfaces. Exhibits antimicrobial activity against the Gram-positive bacteria B.thuringiensis (MIC=4.21 uM) and P.larvae (MIC=11.13 uM), the Gram-negative bacteria E.coli (MIC=6.50 uM) and the multidrug-resistant A.baumannii (MIC=5 ug/ml, MBC=10 ug/ml), as well as against the fungus B.bassiana (IC(50)=2.57 uM). The synthetic peptide also exhibits antimicrobial activity against the Gram-positive bacterium P.larvae (MIC=41.12 uM), the Gram-negative bacterium P.aeruginosa (MIC=65.75 uM), and the fungus B.bassiana (IC(50)=44.27 uM). Is also able to prevent A.baumannii biofilm formation and eliminate established A.baumannii biofilms. In vitro, does not induce an inflammatory response and has no cytotoxic activity against mammalian cells. In Apis cerana (Indian honeybee), this protein is Secapin.